The sequence spans 690 residues: Elongation factor G (690 aa).

The tr-type G domain maps to 8–283 (SRCRNIGIMA…AVVDFLPSPS (276 aa)). Residues 17 to 24 (AHIDAGKT), 81 to 85 (DTPGH), and 135 to 138 (NKMD) each bind GTP.

This sequence belongs to the TRAFAC class translation factor GTPase superfamily. Classic translation factor GTPase family. EF-G/EF-2 subfamily.

The protein resides in the cytoplasm. Its function is as follows. Catalyzes the GTP-dependent ribosomal translocation step during translation elongation. During this step, the ribosome changes from the pre-translocational (PRE) to the post-translocational (POST) state as the newly formed A-site-bound peptidyl-tRNA and P-site-bound deacylated tRNA move to the P and E sites, respectively. Catalyzes the coordinated movement of the two tRNA molecules, the mRNA and conformational changes in the ribosome. This is Elongation factor G from Anaplasma marginale (strain Florida).